The primary structure comprises 290 residues: Protein-lysine methyltransferase METTL21E (290 aa).

Residues Trp96, 124 to 126 (GAG), Asp145, Trp176, and Ala197 each bind S-adenosyl-L-methionine.

The protein belongs to the methyltransferase superfamily. METTL21 family.

Functionally, protein-lysine methyltransferase. The polypeptide is Protein-lysine methyltransferase METTL21E (METTL21E) (Bos taurus (Bovine)).